The primary structure comprises 85 residues: Large ribosomal subunit protein bL27 (85 aa).

The tract at residues 1 to 25 (MAHKKAGGSSRNGRDSHSKRLGVKH) is disordered.

This sequence belongs to the bacterial ribosomal protein bL27 family.

The protein is Large ribosomal subunit protein bL27 of Buchnera aphidicola subsp. Baizongia pistaciae (strain Bp).